The primary structure comprises 121 residues: IDYRKCQASQILKEHGMDKVIPLPELVCTMFHISGLSTQAEVNNHSNKEYGIFQISNDGWCAEKQEDVANSVCGILCSKFLDDDITDDIECAKKILQLPEGLGYWKAHETFCLEDLDQWRC.

Residues 1 to 121 form the C-type lysozyme domain; the sequence is IDYRKCQASQ…CLEDLDQWRC (121 aa). 4 cysteine pairs are disulfide-bonded: cysteine 6–cysteine 121, cysteine 28–cysteine 112, cysteine 61–cysteine 77, and cysteine 73–cysteine 91. Asparagine 44 carries an N-linked (GlcNAc...) asparagine glycan. Residues lysine 79, aspartate 82, aspartate 84, aspartate 87, and aspartate 88 each coordinate Ca(2+).

The protein belongs to the glycosyl hydrolase 22 family. As to quaternary structure, lactose synthase (LS) is a heterodimer of a catalytic component, beta1,4-galactosyltransferase (beta4Gal-T1) and a regulatory component, alpha-lactalbumin (LA). Mammary gland specific. Secreted in milk.

The protein localises to the secreted. Regulatory subunit of lactose synthase, changes the substrate specificity of galactosyltransferase in the mammary gland making glucose a good acceptor substrate for this enzyme. This enables LS to synthesize lactose, the major carbohydrate component of milk. In other tissues, galactosyltransferase transfers galactose onto the N-acetylglucosamine of the oligosaccharide chains in glycoproteins. The chain is Alpha-lactalbumin (LALBA) from Notamacropus rufogriseus (Red-necked wallaby).